The sequence spans 893 residues: Protein kintoun (893 aa).

Disordered regions lie at residues 211–243, 372–395, 587–719, 781–821, and 834–893; these read KNAT…VLPM, LSRE…EEAG, EQVH…SIDD, QRKK…QQTA, and PQNN…DEDM. The span at 214–232 shows a compositional bias: basic and acidic residues; that stretch reads TAEEREPHPLEHTYPKKPE. Ser-377 bears the Phosphoserine mark. The segment covering 594 to 603 has biased composition (acidic residues); that stretch reads QQEEEEEEEQ. The span at 609 to 626 shows a compositional bias: basic residues; that stretch reads HQHKKGNKKQRKRNKKQR. Residues 640 to 651 are compositionally biased toward low complexity; sequence QQQQHQKQQQQQ. Polar residues-rich tracts occupy residues 656 to 667 and 684 to 694; these read ENSSPESLNAGS and FSECNDSSSVQ. Residues 709–719 are compositionally biased toward low complexity; that stretch reads SISESSSSIDD. Over residues 781-797 the composition is skewed to basic residues; sequence QRKKNQKRRDCKLRAQQ. Ser-801 carries the post-translational modification Phosphoserine. Residues 836–848 show a composition bias toward low complexity; that stretch reads NNNNRSYSKNNKN. Residues 865-877 are compositionally biased toward basic and acidic residues; sequence NNEEDTKRNEADA. Acidic residues predominate over residues 884–893; that stretch reads EMDDDDDEDM.

This sequence belongs to the PIH1 family. Kintoun subfamily. Interacts with Pp1alpha-96A, Pp1-87B, Pp1-13C and flw.

The protein localises to the cytoplasm. Required for cytoplasmic pre-assembly of axonemal dyneins, thereby playing a central role in motility in cilia and flagella. Involved in pre-assembly of dynein arm complexes in the cytoplasm before intraflagellar transport loads them for the ciliary compartment. The protein is Protein kintoun of Drosophila grimshawi (Hawaiian fruit fly).